We begin with the raw amino-acid sequence, 202 residues long: Translation initiation factor 2 subunit beta (202 aa).

The region spanning 145-202 is the TRAM domain; it reads AIEEGGTYELRIDAVGSKGDGIAKIDKYTVFVPGATKGDVVKVKIKKISGNLAFSERA.

It belongs to the eIF-2-beta/eIF-5 family. Heterotrimer composed of an alpha, a beta and a gamma chain.

Functionally, eIF-2 functions in the early steps of protein synthesis by forming a ternary complex with GTP and initiator tRNA. The chain is Translation initiation factor 2 subunit beta (eif2b) from Methanosarcina mazei (strain ATCC BAA-159 / DSM 3647 / Goe1 / Go1 / JCM 11833 / OCM 88) (Methanosarcina frisia).